The chain runs to 162 residues: Crossover junction endodeoxyribonuclease RuvC (162 aa).

Active-site residues include D8, E69, and H141. D8, E69, and H141 together coordinate Mg(2+).

It belongs to the RuvC family. In terms of assembly, homodimer which binds Holliday junction (HJ) DNA. The HJ becomes 2-fold symmetrical on binding to RuvC with unstacked arms; it has a different conformation from HJ DNA in complex with RuvA. In the full resolvosome a probable DNA-RuvA(4)-RuvB(12)-RuvC(2) complex forms which resolves the HJ. The cofactor is Mg(2+).

It is found in the cytoplasm. It catalyses the reaction Endonucleolytic cleavage at a junction such as a reciprocal single-stranded crossover between two homologous DNA duplexes (Holliday junction).. Its function is as follows. The RuvA-RuvB-RuvC complex processes Holliday junction (HJ) DNA during genetic recombination and DNA repair. Endonuclease that resolves HJ intermediates. Cleaves cruciform DNA by making single-stranded nicks across the HJ at symmetrical positions within the homologous arms, yielding a 5'-phosphate and a 3'-hydroxyl group; requires a central core of homology in the junction. The consensus cleavage sequence is 5'-(A/T)TT(C/G)-3'. Cleavage occurs on the 3'-side of the TT dinucleotide at the point of strand exchange. HJ branch migration catalyzed by RuvA-RuvB allows RuvC to scan DNA until it finds its consensus sequence, where it cleaves and resolves the cruciform DNA. In Wolbachia sp. subsp. Drosophila simulans (strain wRi), this protein is Crossover junction endodeoxyribonuclease RuvC.